The following is a 166-amino-acid chain: NAD(P)H-quinone oxidoreductase subunit I, chloroplastic (166 aa).

2 consecutive 4Fe-4S ferredoxin-type domains span residues 55 to 84 (GRIH…VDWK) and 95 to 124 (LNYS…MTEE). 8 residues coordinate [4Fe-4S] cluster: cysteine 64, cysteine 67, cysteine 70, cysteine 74, cysteine 104, cysteine 107, cysteine 110, and cysteine 114.

The protein belongs to the complex I 23 kDa subunit family. As to quaternary structure, NDH is composed of at least 16 different subunits, 5 of which are encoded in the nucleus. It depends on [4Fe-4S] cluster as a cofactor.

Its subcellular location is the plastid. It localises to the chloroplast thylakoid membrane. It carries out the reaction a plastoquinone + NADH + (n+1) H(+)(in) = a plastoquinol + NAD(+) + n H(+)(out). The enzyme catalyses a plastoquinone + NADPH + (n+1) H(+)(in) = a plastoquinol + NADP(+) + n H(+)(out). Its function is as follows. NDH shuttles electrons from NAD(P)H:plastoquinone, via FMN and iron-sulfur (Fe-S) centers, to quinones in the photosynthetic chain and possibly in a chloroplast respiratory chain. The immediate electron acceptor for the enzyme in this species is believed to be plastoquinone. Couples the redox reaction to proton translocation, and thus conserves the redox energy in a proton gradient. The protein is NAD(P)H-quinone oxidoreductase subunit I, chloroplastic of Bahiopsis tomentosa (Tecote).